Here is a 170-residue protein sequence, read N- to C-terminus: Inosine/xanthosine triphosphatase (170 aa).

It belongs to the YjjX NTPase family. Homodimer. Mg(2+) serves as cofactor. It depends on Mn(2+) as a cofactor.

The enzyme catalyses XTP + H2O = XDP + phosphate + H(+). It catalyses the reaction ITP + H2O = IDP + phosphate + H(+). Its function is as follows. Phosphatase that hydrolyzes non-canonical purine nucleotides such as XTP and ITP to their respective diphosphate derivatives. Probably excludes non-canonical purines from DNA/RNA precursor pool, thus preventing their incorporation into DNA/RNA and avoiding chromosomal lesions. This is Inosine/xanthosine triphosphatase from Aliivibrio fischeri (strain MJ11) (Vibrio fischeri).